The following is a 941-amino-acid chain: Pre-mRNA-processing factor 6 (941 aa).

The disordered stretch occupies residues 1-79 (MNKKKKPFLG…DEDLNDTNYD (79 aa)). Positions 39 to 65 (DANDPVDDRHAPPGKRTVGDQMKKNQA) are enriched in basic and acidic residues. A compositionally biased stretch (acidic residues) spans 66–78 (ADDDDEDLNDTNY). Residue Ser-143 is modified to Phosphoserine. Phosphothreonine is present on residues Thr-180, Thr-266, and Thr-275. At Ser-279 the chain carries Phosphoserine. HAT repeat units follow at residues 384–416 (TDIR…LEEP), 418–444 (DARI…ARLE), 445–476 (TYEN…LEEA), 554–586 (NALE…FEKN), 588–620 (GTRE…SKWL), 622–654 (GDVP…LESE), 689–721 (GNIT…IEEQ), 723–755 (ELME…LEEK), and 855–887 (RKIT…FELQ).

In terms of assembly, identified in the spliceosome B complex. Identified in the spliceosome C complex. Associates with the U5 snRNP particle. Component of the U4/U6-U5 tri-snRNP complex composed of the U4, U6 and U5 snRNAs and at least PRPF3, PRPF4, PRPF6, PRPF8, PRPF31, SNRNP200, TXNL4A, SNRNP40, DDX23, CD2BP2, PPIH, SNU13, EFTUD2, SART1 and USP39, LSm proteins LSm2-8 and Sm proteins. Interacts with ARAF1. Interacts with AR and NR3C1, but not ESR1, independently of the presence of hormones. Interacts with USH1G. Phosphorylated by PRP4K during spliceosome assembly.

Its subcellular location is the nucleus. It is found in the nucleoplasm. It localises to the nucleus speckle. Functionally, involved in pre-mRNA splicing as component of the U4/U6-U5 tri-snRNP complex, one of the building blocks of the spliceosome. Enhances dihydrotestosterone-induced transactivation activity of AR, as well as dexamethasone-induced transactivation activity of NR3C1, but does not affect estrogen-induced transactivation. The protein is Pre-mRNA-processing factor 6 (Prpf6) of Rattus norvegicus (Rat).